Here is a 414-residue protein sequence, read N- to C-terminus: Serine hydroxymethyltransferase (414 aa).

Residues leucine 121 and 125–127 (GHL) contribute to the (6S)-5,6,7,8-tetrahydrofolate site. Lysine 229 bears the N6-(pyridoxal phosphate)lysine mark.

Belongs to the SHMT family. In terms of assembly, homodimer. Pyridoxal 5'-phosphate is required as a cofactor.

It is found in the cytoplasm. It carries out the reaction (6R)-5,10-methylene-5,6,7,8-tetrahydrofolate + glycine + H2O = (6S)-5,6,7,8-tetrahydrofolate + L-serine. It functions in the pathway one-carbon metabolism; tetrahydrofolate interconversion. The protein operates within amino-acid biosynthesis; glycine biosynthesis; glycine from L-serine: step 1/1. In terms of biological role, catalyzes the reversible interconversion of serine and glycine with tetrahydrofolate (THF) serving as the one-carbon carrier. This reaction serves as the major source of one-carbon groups required for the biosynthesis of purines, thymidylate, methionine, and other important biomolecules. Also exhibits THF-independent aldolase activity toward beta-hydroxyamino acids, producing glycine and aldehydes, via a retro-aldol mechanism. In Janthinobacterium sp. (strain Marseille) (Minibacterium massiliensis), this protein is Serine hydroxymethyltransferase.